Consider the following 154-residue polypeptide: SsrA-binding protein (154 aa).

This sequence belongs to the SmpB family.

The protein resides in the cytoplasm. Required for rescue of stalled ribosomes mediated by trans-translation. Binds to transfer-messenger RNA (tmRNA), required for stable association of tmRNA with ribosomes. tmRNA and SmpB together mimic tRNA shape, replacing the anticodon stem-loop with SmpB. tmRNA is encoded by the ssrA gene; the 2 termini fold to resemble tRNA(Ala) and it encodes a 'tag peptide', a short internal open reading frame. During trans-translation Ala-aminoacylated tmRNA acts like a tRNA, entering the A-site of stalled ribosomes, displacing the stalled mRNA. The ribosome then switches to translate the ORF on the tmRNA; the nascent peptide is terminated with the 'tag peptide' encoded by the tmRNA and targeted for degradation. The ribosome is freed to recommence translation, which seems to be the essential function of trans-translation. The protein is SsrA-binding protein of Ruminiclostridium cellulolyticum (strain ATCC 35319 / DSM 5812 / JCM 6584 / H10) (Clostridium cellulolyticum).